The chain runs to 213 residues: Putative amidate substrates transporter protein (213 aa).

Transmembrane regions (helical) follow at residues 4 to 20, 32 to 48, 56 to 72, 116 to 132, 146 to 162, and 172 to 188; these read VGLFYVGAVLIIDGLML, LNFFVGGLQVVTPTVLI, AVIFAASGLYLFGFTYL, VIWLLWAVLWFMLFLLL, VAVAEGVITAAVPAFLI, and LPAAVIAVIGFAAVVLA.

It belongs to the AmiS/UreI family.

It localises to the cell membrane. Possible transporter that might be responsible for the adsorption of amidase substrates or release of their hydrolysis products. The chain is Putative amidate substrates transporter protein from Mycolicibacterium smegmatis (Mycobacterium smegmatis).